Reading from the N-terminus, the 228-residue chain is LexA repressor (228 aa).

Residues 26-46 (FDEMKDALDLRSKSGIHRLIT) constitute a DNA-binding region (H-T-H motif). Active-site for autocatalytic cleavage activity residues include Ser-149 and Lys-187.

The protein belongs to the peptidase S24 family. As to quaternary structure, homodimer.

The enzyme catalyses Hydrolysis of Ala-|-Gly bond in repressor LexA.. In terms of biological role, represses a number of genes involved in the response to DNA damage (SOS response), including recA and lexA. In the presence of single-stranded DNA, RecA interacts with LexA causing an autocatalytic cleavage which disrupts the DNA-binding part of LexA, leading to derepression of the SOS regulon and eventually DNA repair. The chain is LexA repressor from Cereibacter sphaeroides (strain ATCC 17025 / ATH 2.4.3) (Rhodobacter sphaeroides).